Reading from the N-terminus, the 390-residue chain is LL-diaminopimelate aminotransferase 2 (390 aa).

Substrate-binding residues include Tyr13 and Gly38. Pyridoxal 5'-phosphate contacts are provided by residues Tyr67, 102 to 103 (SK), Tyr127, Asn177, Tyr208, and 236 to 238 (SLS). Substrate-binding residues include Lys103, Tyr127, and Asn177. An N6-(pyridoxal phosphate)lysine modification is found at Lys239. Arg247 serves as a coordination point for pyridoxal 5'-phosphate. Arg365 contributes to the substrate binding site.

It belongs to the class-I pyridoxal-phosphate-dependent aminotransferase family. LL-diaminopimelate aminotransferase subfamily. As to quaternary structure, homodimer. Requires pyridoxal 5'-phosphate as cofactor.

The enzyme catalyses (2S,6S)-2,6-diaminopimelate + 2-oxoglutarate = (S)-2,3,4,5-tetrahydrodipicolinate + L-glutamate + H2O + H(+). It participates in amino-acid biosynthesis; L-lysine biosynthesis via DAP pathway; LL-2,6-diaminopimelate from (S)-tetrahydrodipicolinate (aminotransferase route): step 1/1. Functionally, involved in the synthesis of meso-diaminopimelate (m-DAP or DL-DAP), required for both lysine and peptidoglycan biosynthesis. Catalyzes the direct conversion of tetrahydrodipicolinate to LL-diaminopimelate. The chain is LL-diaminopimelate aminotransferase 2 from Nostoc sp. (strain PCC 7120 / SAG 25.82 / UTEX 2576).